Here is a 196-residue protein sequence, read N- to C-terminus: Large ribosomal subunit protein eL15 (196 aa).

Disordered regions lie at residues 72–93 and 163–196; these read SARK…TRIT and GLTG…GKGK.

This sequence belongs to the eukaryotic ribosomal protein eL15 family. Part of the 50S ribosomal subunit. Interacts with protein L7Ae and weakly with L44e.

This is Large ribosomal subunit protein eL15 (rpl15e) from Haloarcula marismortui (strain ATCC 43049 / DSM 3752 / JCM 8966 / VKM B-1809) (Halobacterium marismortui).